Reading from the N-terminus, the 834-residue chain is Probable phosphoenolpyruvate synthase (834 aa).

Histidine 447 functions as the Tele-phosphohistidine intermediate in the catalytic mechanism. Residues arginine 550, arginine 598, glutamate 699, glycine 720, serine 721, asparagine 722, and aspartate 723 each coordinate substrate. Mg(2+) is bound at residue glutamate 699. Mg(2+) is bound at residue aspartate 723. Residue cysteine 772 is the Proton donor of the active site.

This sequence belongs to the PEP-utilizing enzyme family. As to quaternary structure, homooligomer. Forms a large complex of about 2000 kDa. Requires Mg(2+) as cofactor. In terms of processing, the N-terminus is blocked.

It catalyses the reaction pyruvate + ATP + H2O = phosphoenolpyruvate + AMP + phosphate + 2 H(+). The protein operates within carbohydrate biosynthesis; gluconeogenesis. Catalyzes the phosphorylation of pyruvate to phosphoenolpyruvate. The chain is Probable phosphoenolpyruvate synthase (ppsA) from Staphylothermus marinus (strain ATCC 43588 / DSM 3639 / JCM 9404 / F1).